A 273-amino-acid polypeptide reads, in one-letter code: 3-methyl-2-oxobutanoate hydroxymethyltransferase (273 aa).

Residues Asp-53 and Asp-92 each coordinate Mg(2+). 3-methyl-2-oxobutanoate is bound by residues 53 to 54, Asp-92, and Lys-120; that span reads DS. Mg(2+) is bound at residue Glu-122. Glu-189 acts as the Proton acceptor in catalysis.

It belongs to the PanB family. As to quaternary structure, homodecamer; pentamer of dimers. It depends on Mg(2+) as a cofactor.

The protein localises to the cytoplasm. It catalyses the reaction 3-methyl-2-oxobutanoate + (6R)-5,10-methylene-5,6,7,8-tetrahydrofolate + H2O = 2-dehydropantoate + (6S)-5,6,7,8-tetrahydrofolate. It participates in cofactor biosynthesis; (R)-pantothenate biosynthesis; (R)-pantoate from 3-methyl-2-oxobutanoate: step 1/2. Its function is as follows. Catalyzes the reversible reaction in which hydroxymethyl group from 5,10-methylenetetrahydrofolate is transferred onto alpha-ketoisovalerate to form ketopantoate. The chain is 3-methyl-2-oxobutanoate hydroxymethyltransferase from Cupriavidus necator (strain ATCC 17699 / DSM 428 / KCTC 22496 / NCIMB 10442 / H16 / Stanier 337) (Ralstonia eutropha).